We begin with the raw amino-acid sequence, 275 residues long: NAD kinase (275 aa).

Asp-68 (proton acceptor) is an active-site residue. Residues 68–69, Arg-73, 136–137, Lys-147, Arg-164, Asp-166, 177–182, Ala-201, and Gln-236 each bind NAD(+); these read DG, NE, and TAYAMS.

The protein belongs to the NAD kinase family. Requires a divalent metal cation as cofactor.

The protein localises to the cytoplasm. It catalyses the reaction NAD(+) + ATP = ADP + NADP(+) + H(+). Its function is as follows. Involved in the regulation of the intracellular balance of NAD and NADP, and is a key enzyme in the biosynthesis of NADP. Catalyzes specifically the phosphorylation on 2'-hydroxyl of the adenosine moiety of NAD to yield NADP. This chain is NAD kinase, found in Methanosarcina barkeri (strain Fusaro / DSM 804).